We begin with the raw amino-acid sequence, 83 residues long: Small ribosomal subunit protein uS17 (83 aa).

Belongs to the universal ribosomal protein uS17 family. In terms of assembly, part of the 30S ribosomal subunit.

One of the primary rRNA binding proteins, it binds specifically to the 5'-end of 16S ribosomal RNA. The sequence is that of Small ribosomal subunit protein uS17 from Campylobacter jejuni subsp. jejuni serotype O:6 (strain 81116 / NCTC 11828).